A 448-amino-acid polypeptide reads, in one-letter code: Phosphoglucosamine mutase (448 aa).

The active-site Phosphoserine intermediate is the serine 100. Mg(2+)-binding residues include serine 100, aspartate 240, aspartate 242, and aspartate 244. At serine 100 the chain carries Phosphoserine.

The protein belongs to the phosphohexose mutase family. It depends on Mg(2+) as a cofactor. Post-translationally, activated by phosphorylation.

The enzyme catalyses alpha-D-glucosamine 1-phosphate = D-glucosamine 6-phosphate. Catalyzes the conversion of glucosamine-6-phosphate to glucosamine-1-phosphate. The protein is Phosphoglucosamine mutase of Clostridium perfringens (strain SM101 / Type A).